Reading from the N-terminus, the 1404-residue chain is DNA-directed RNA polymerase subunit beta' (1404 aa).

Zn(2+) contacts are provided by Cys-70, Cys-72, Cys-85, and Cys-88. Positions 460, 462, and 464 each coordinate Mg(2+). Zn(2+)-binding residues include Cys-825, Cys-899, Cys-906, and Cys-909.

It belongs to the RNA polymerase beta' chain family. In terms of assembly, the RNAP catalytic core consists of 2 alpha, 1 beta, 1 beta' and 1 omega subunit. When a sigma factor is associated with the core the holoenzyme is formed, which can initiate transcription. Mg(2+) is required as a cofactor. Zn(2+) serves as cofactor.

It catalyses the reaction RNA(n) + a ribonucleoside 5'-triphosphate = RNA(n+1) + diphosphate. Functionally, DNA-dependent RNA polymerase catalyzes the transcription of DNA into RNA using the four ribonucleoside triphosphates as substrates. The polypeptide is DNA-directed RNA polymerase subunit beta' (Nitrosomonas eutropha (strain DSM 101675 / C91 / Nm57)).